The following is a 71-amino-acid chain: Small ribosomal subunit protein bS21 (71 aa).

This sequence belongs to the bacterial ribosomal protein bS21 family.

This Psychromonas ingrahamii (strain DSM 17664 / CCUG 51855 / 37) protein is Small ribosomal subunit protein bS21.